The chain runs to 696 residues: Rho-related BTB domain-containing protein 1 (696 aa).

Positions 1–210 (MDADMDYERP…DNAIRAALIS (210 aa)) are rho-like. Residues 21–28 (GDNAVGKT), 84–88 (DTFGD), and 140–143 (CQLD) contribute to the GTP site. BTB domains follow at residues 266 to 427 (ADVL…DEKE) and 485 to 552 (SDVT…SPNL). Residues 327-348 (VDPEEEREEGPPRIPQADQWKS) form a disordered region.

This sequence belongs to the small GTPase superfamily. Rho family. Ubiquitous, with highest levels in skeletal muscle, placenta, testis, stomach, and kidney, followed by uterus and adrenal gland. Expressed in a variety of fetal tissues.

This is Rho-related BTB domain-containing protein 1 (RHOBTB1) from Homo sapiens (Human).